The sequence spans 349 residues: Anthranilate phosphoribosyltransferase (349 aa).

5-phospho-alpha-D-ribose 1-diphosphate-binding positions include glycine 81, 84 to 85, threonine 89, 91 to 94, 109 to 117, and alanine 121; these read GD, NVST, and KHGNRAASS. Position 81 (glycine 81) interacts with anthranilate. Serine 93 contributes to the Mg(2+) binding site. An anthranilate-binding site is contributed by asparagine 112. Residue arginine 167 coordinates anthranilate. Residues aspartate 226 and glutamate 227 each coordinate Mg(2+).

Belongs to the anthranilate phosphoribosyltransferase family. Homodimer. Mg(2+) serves as cofactor.

The enzyme catalyses N-(5-phospho-beta-D-ribosyl)anthranilate + diphosphate = 5-phospho-alpha-D-ribose 1-diphosphate + anthranilate. Its pathway is amino-acid biosynthesis; L-tryptophan biosynthesis; L-tryptophan from chorismate: step 2/5. Catalyzes the transfer of the phosphoribosyl group of 5-phosphorylribose-1-pyrophosphate (PRPP) to anthranilate to yield N-(5'-phosphoribosyl)-anthranilate (PRA). The polypeptide is Anthranilate phosphoribosyltransferase (Methylocella silvestris (strain DSM 15510 / CIP 108128 / LMG 27833 / NCIMB 13906 / BL2)).